Reading from the N-terminus, the 110-residue chain is Nucleoid-associated protein SYO3AOP1_1366 (110 aa).

This sequence belongs to the YbaB/EbfC family. In terms of assembly, homodimer.

The protein localises to the cytoplasm. It is found in the nucleoid. Its function is as follows. Binds to DNA and alters its conformation. May be involved in regulation of gene expression, nucleoid organization and DNA protection. This chain is Nucleoid-associated protein SYO3AOP1_1366, found in Sulfurihydrogenibium sp. (strain YO3AOP1).